The primary structure comprises 400 residues: Acetate kinase (400 aa).

Position 10 (asparagine 10) interacts with Mg(2+). Lysine 17 provides a ligand contact to ATP. Arginine 91 is a binding site for substrate. Aspartate 150 functions as the Proton donor/acceptor in the catalytic mechanism. Residues 210–214, 285–287, and 333–337 contribute to the ATP site; these read HLGNG, DCR, and GIGEN. Glutamate 387 lines the Mg(2+) pocket.

This sequence belongs to the acetokinase family. As to quaternary structure, homodimer. Mg(2+) is required as a cofactor. The cofactor is Mn(2+).

The protein localises to the cytoplasm. It carries out the reaction acetate + ATP = acetyl phosphate + ADP. The protein operates within metabolic intermediate biosynthesis; acetyl-CoA biosynthesis; acetyl-CoA from acetate: step 1/2. Catalyzes the formation of acetyl phosphate from acetate and ATP. Can also catalyze the reverse reaction. In Photorhabdus laumondii subsp. laumondii (strain DSM 15139 / CIP 105565 / TT01) (Photorhabdus luminescens subsp. laumondii), this protein is Acetate kinase.